A 193-amino-acid chain; its full sequence is Ferredoxin-2, mitochondrial (193 aa).

The tract at residues 38-70 (QATPEKLETSNEEEGSSSAQITAGVESDAENQR) is disordered. In terms of domain architecture, 2Fe-2S ferredoxin-type spans 78–180 (VEVVFLDRSG…GAEFTLPKIT (103 aa)). The [2Fe-2S] cluster site is built by cysteine 115, cysteine 121, cysteine 124, and cysteine 161.

It belongs to the adrenodoxin/putidaredoxin family. As to quaternary structure, component of the mitochondrial core iron-sulfur cluster (ISC) complex composed of NFS1, LYRM4, NDUFAB1, ISCU, FXN, and FDX2; this complex is a heterohexamer containing two copies of each monomer. It depends on [2Fe-2S] cluster as a cofactor.

It localises to the mitochondrion. The protein localises to the mitochondrion matrix. Functionally, electron donor, of the core iron-sulfur cluster (ISC) assembly complex, that acts to reduce the persulfide into sulfide during [2Fe-2S] clusters assembly on the scaffolding protein ISCU. The core iron-sulfur cluster (ISC) assembly complex is involved in the de novo synthesis of a [2Fe-2S] cluster, the first step of the mitochondrial iron-sulfur protein biogenesis. This process is initiated by the cysteine desulfurase complex (NFS1:LYRM4:NDUFAB1) that produces persulfide which is delivered on the scaffold protein ISCU in a FXN-dependent manner. Then this complex is stabilized by FDX2 which provides reducing equivalents to accomplish the [2Fe-2S] cluster assembly. Finally, the [2Fe-2S] cluster is transferred from ISCU to chaperone proteins, including HSCB, HSPA9 and GLRX5. Essential for coenzyme Q biosynthesis: together with FDXR, transfers the electrons required for the hydroxylation reaction performed by COQ6. This is Ferredoxin-2, mitochondrial from Xenopus laevis (African clawed frog).